The sequence spans 406 residues: Biofilm regulatory protein A (406 aa).

The first 26 residues, 1 to 26, serve as a signal peptide directing secretion; sequence MKIGKKILIMLVTIFLTSLVALGVYA. Low complexity predominate over residues 347–397; it reads SSSASDYSSSGNYSGSSSDYGSSSSYGSNSSSGSSSDYSGQNSYNQGNYQQ. The tract at residues 347–406 is disordered; sequence SSSASDYSSSGNYSGSSSDYGSSSSYGSNSSSGSSSDYSGQNSYNQGNYQQPAAGTGIGN.

The protein belongs to the LytR/CpsA/Psr (LCP) family.

Its subcellular location is the cell envelope. Its function is as follows. Involved in biofilm formation, cell division, autolysis and the regulation of acid and oxidative stress tolerance. May be associated with systemic virulence in blood. In Streptococcus mutans serotype c (strain ATCC 700610 / UA159), this protein is Biofilm regulatory protein A (brpA).